The following is a 508-amino-acid chain: Maturase K (508 aa).

It belongs to the intron maturase 2 family. MatK subfamily.

It is found in the plastid. The protein localises to the chloroplast. Usually encoded in the trnK tRNA gene intron. Probably assists in splicing its own and other chloroplast group II introns. The sequence is that of Maturase K from Collinsia heterophylla (Purple Chinese houses).